We begin with the raw amino-acid sequence, 401 residues long: Probable 2,3-bisphosphoglycerate-independent phosphoglycerate mutase (401 aa).

This sequence belongs to the BPG-independent phosphoglycerate mutase family. A-PGAM subfamily.

The enzyme catalyses (2R)-2-phosphoglycerate = (2R)-3-phosphoglycerate. Its pathway is carbohydrate degradation; glycolysis; pyruvate from D-glyceraldehyde 3-phosphate: step 3/5. Its function is as follows. Catalyzes the interconversion of 2-phosphoglycerate and 3-phosphoglycerate. The polypeptide is Probable 2,3-bisphosphoglycerate-independent phosphoglycerate mutase (Thermotoga petrophila (strain ATCC BAA-488 / DSM 13995 / JCM 10881 / RKU-1)).